The following is a 347-amino-acid chain: Spermidine/putrescine import ATP-binding protein PotA (347 aa).

The 231-residue stretch at 6-236 (IELRDISKHY…PKNSFVAKFI (231 aa)) folds into the ABC transporter domain. 38–45 (GPSGCGKT) provides a ligand contact to ATP.

It belongs to the ABC transporter superfamily. Spermidine/putrescine importer (TC 3.A.1.11.1) family. The complex is composed of two ATP-binding proteins (PotA), two transmembrane proteins (PotB and PotC) and a solute-binding protein (PotD).

It localises to the cell membrane. The catalysed reaction is ATP + H2O + polyamine-[polyamine-binding protein]Side 1 = ADP + phosphate + polyamineSide 2 + [polyamine-binding protein]Side 1.. In terms of biological role, part of the ABC transporter complex PotABCD involved in spermidine/putrescine import. Responsible for energy coupling to the transport system. The protein is Spermidine/putrescine import ATP-binding protein PotA of Clostridioides difficile (strain 630) (Peptoclostridium difficile).